The following is a 251-amino-acid chain: Probable transcriptional regulatory protein Swol_1435 (251 aa).

The tract at residues 1–23 (MAGHSKWANIKHKKARSDEKRGK) is disordered.

The protein belongs to the TACO1 family.

It is found in the cytoplasm. The polypeptide is Probable transcriptional regulatory protein Swol_1435 (Syntrophomonas wolfei subsp. wolfei (strain DSM 2245B / Goettingen)).